The sequence spans 658 residues: UvrABC system protein B (658 aa).

The region spanning 26–413 is the Helicase ATP-binding domain; it reads EGINSGKKKQ…SPEVIEQIIR (388 aa). Residue 39 to 46 participates in ATP binding; it reads GATGTGKT. The short motif at 92–115 is the Beta-hairpin element; the sequence is YYDYYQPEAYVPQTDTFIEKDAQI. The Helicase C-terminal domain occupies 430–596; it reads QIDDLLGEIQ…TIQKGVRDVI (167 aa). Residues 622–657 enclose the UVR domain; that stretch reads EKTIAKMEAEMKEAAKALDFERAAELRDLLLELKAE.

It belongs to the UvrB family. Forms a heterotetramer with UvrA during the search for lesions. Interacts with UvrC in an incision complex.

The protein localises to the cytoplasm. Functionally, the UvrABC repair system catalyzes the recognition and processing of DNA lesions. A damage recognition complex composed of 2 UvrA and 2 UvrB subunits scans DNA for abnormalities. Upon binding of the UvrA(2)B(2) complex to a putative damaged site, the DNA wraps around one UvrB monomer. DNA wrap is dependent on ATP binding by UvrB and probably causes local melting of the DNA helix, facilitating insertion of UvrB beta-hairpin between the DNA strands. Then UvrB probes one DNA strand for the presence of a lesion. If a lesion is found the UvrA subunits dissociate and the UvrB-DNA preincision complex is formed. This complex is subsequently bound by UvrC and the second UvrB is released. If no lesion is found, the DNA wraps around the other UvrB subunit that will check the other stand for damage. The sequence is that of UvrABC system protein B from Bacillus cereus (strain ATCC 10987 / NRS 248).